Reading from the N-terminus, the 545-residue chain is Carboxypeptidase Y homolog A (545 aa).

Residues 1–17 form the signal peptide; sequence MKSLALALLVGGAIAAG. The propeptide occupies 18–123; that stretch reads PQQQVLQAPV…KLEAYDLRVK (106 aa). Intrachain disulfides connect cysteine 177/cysteine 416, cysteine 311/cysteine 325, cysteine 335/cysteine 358, cysteine 342/cysteine 351, and cysteine 380/cysteine 386. An N-linked (GlcNAc...) asparagine glycan is attached at asparagine 208. Residue serine 264 is part of the active site. Residue aspartate 455 is part of the active site. N-linked (GlcNAc...) asparagine glycans are attached at residues asparagine 485, asparagine 491, and asparagine 506. Residue histidine 517 is part of the active site.

Belongs to the peptidase S10 family.

It localises to the vacuole. The enzyme catalyses Release of a C-terminal amino acid with broad specificity.. In terms of biological role, vacuolar carboxypeptidase involved in degradation of small peptides. Digests preferentially peptides containing an aliphatic or hydrophobic residue in P1' position, as well as methionine, leucine or phenylalanine in P1 position of ester substrate. The sequence is that of Carboxypeptidase Y homolog A (CPYA) from Ajellomyces dermatitidis (strain ER-3 / ATCC MYA-2586) (Blastomyces dermatitidis).